Consider the following 179-residue polypeptide: NAD(P)H-quinone oxidoreductase subunit 6, chloroplastic (179 aa).

A run of 5 helical transmembrane segments spans residues 8–28 (ITLFVLDFFIFVGALGVVFFN), 30–50 (IIYSALFLGLTFLSVALLYLL), 58–78 (VAQVIIYVGAINVLIVFAIML), 98–118 (SFCVNFILFSTIVTMIVTTPW), and 150–170 (VLPFELLSLLLLIALIGAVII).

This sequence belongs to the complex I subunit 6 family. As to quaternary structure, NDH is composed of at least 16 different subunits, 5 of which are encoded in the nucleus.

The protein localises to the plastid. The protein resides in the chloroplast thylakoid membrane. The catalysed reaction is a plastoquinone + NADH + (n+1) H(+)(in) = a plastoquinol + NAD(+) + n H(+)(out). It catalyses the reaction a plastoquinone + NADPH + (n+1) H(+)(in) = a plastoquinol + NADP(+) + n H(+)(out). In terms of biological role, NDH shuttles electrons from NAD(P)H:plastoquinone, via FMN and iron-sulfur (Fe-S) centers, to quinones in the photosynthetic chain and possibly in a chloroplast respiratory chain. The immediate electron acceptor for the enzyme in this species is believed to be plastoquinone. Couples the redox reaction to proton translocation, and thus conserves the redox energy in a proton gradient. This chain is NAD(P)H-quinone oxidoreductase subunit 6, chloroplastic (ndhG), found in Chaetosphaeridium globosum (Charophycean green alga).